A 208-amino-acid polypeptide reads, in one-letter code: LexA repressor (208 aa).

Residues V29–S49 constitute a DNA-binding region (H-T-H motif). Catalysis depends on for autocatalytic cleavage activity residues S129 and K167.

Belongs to the peptidase S24 family. As to quaternary structure, homodimer.

It carries out the reaction Hydrolysis of Ala-|-Gly bond in repressor LexA.. In terms of biological role, represses a number of genes involved in the response to DNA damage (SOS response), including recA and lexA. In the presence of single-stranded DNA, RecA interacts with LexA causing an autocatalytic cleavage which disrupts the DNA-binding part of LexA, leading to derepression of the SOS regulon and eventually DNA repair. This is LexA repressor from Limosilactobacillus reuteri (strain DSM 20016) (Lactobacillus reuteri).